Reading from the N-terminus, the 191-residue chain is Probable GTP-binding protein EngB (191 aa).

Residues 22 to 190 (RLPEIAFLGR…WQAITTTLQA (169 aa)) enclose the EngB-type G domain. GTP contacts are provided by residues 30–37 (GRSNVGKS), 57–61 (GRTQT), 75–78 (DLPG), 142–145 (TKTD), and 169–171 (FSA). Mg(2+) contacts are provided by Ser-37 and Thr-59.

This sequence belongs to the TRAFAC class TrmE-Era-EngA-EngB-Septin-like GTPase superfamily. EngB GTPase family. Requires Mg(2+) as cofactor.

Its function is as follows. Necessary for normal cell division and for the maintenance of normal septation. The polypeptide is Probable GTP-binding protein EngB (Solibacter usitatus (strain Ellin6076)).